Reading from the N-terminus, the 689-residue chain is Glycine--tRNA ligase beta subunit (689 aa).

Belongs to the class-II aminoacyl-tRNA synthetase family. Tetramer of two alpha and two beta subunits.

The protein localises to the cytoplasm. It carries out the reaction tRNA(Gly) + glycine + ATP = glycyl-tRNA(Gly) + AMP + diphosphate. The protein is Glycine--tRNA ligase beta subunit of Pseudoalteromonas translucida (strain TAC 125).